Here is a 188-residue protein sequence, read N- to C-terminus: Threonylcarbamoyl-AMP synthase (188 aa).

The region spanning 3–188 is the YrdC-like domain; the sequence is QLHPSDIKDI…RSGKILRNGQ (186 aa).

Belongs to the SUA5 family. TsaC subfamily.

The protein localises to the cytoplasm. It carries out the reaction L-threonine + hydrogencarbonate + ATP = L-threonylcarbamoyladenylate + diphosphate + H2O. In terms of biological role, required for the formation of a threonylcarbamoyl group on adenosine at position 37 (t(6)A37) in tRNAs that read codons beginning with adenine. Catalyzes the conversion of L-threonine, HCO(3)(-)/CO(2) and ATP to give threonylcarbamoyl-AMP (TC-AMP) as the acyladenylate intermediate, with the release of diphosphate. The chain is Threonylcarbamoyl-AMP synthase from Shewanella baltica (strain OS155 / ATCC BAA-1091).